Consider the following 360-residue polypeptide: MRILGIETSCDETAASVVLRDEEGRGRILGDVVLSQLEEHSAYGGVVPEIAARAHVEALDALIEEALLRAGVTLRDIDAVAATSGPGLIGGLIVGLMTGKAIARATGKPLYAVNHLEGHALTARLTDGLSFPYLMLLVSGGHTQLILVKGVGEYERWGTTIDDALGEAFDKTAKLLGLPYPGGPAVERAAQAGNAERFDFPRPLVGDARLDFSFSGLKTAVRQAAQSLGPVTDQDIADVCASFQRAISRTLRDRVGRGLKRFRADFASVDQPALVVAGGVAANQTLRRTLQSLCDEHGFRFIAPPLQLCTDNAAMIAWAGAERLAAGLPADGLDAAPRSRWPLDSEAKALIGSGRRGAKA.

Histidine 115 and histidine 119 together coordinate Fe cation. Substrate is bound by residues 137–141, aspartate 170, glycine 183, and asparagine 283; that span reads LVSGG. Aspartate 311 serves as a coordination point for Fe cation.

It belongs to the KAE1 / TsaD family. It depends on Fe(2+) as a cofactor.

The protein resides in the cytoplasm. The enzyme catalyses L-threonylcarbamoyladenylate + adenosine(37) in tRNA = N(6)-L-threonylcarbamoyladenosine(37) in tRNA + AMP + H(+). Its function is as follows. Required for the formation of a threonylcarbamoyl group on adenosine at position 37 (t(6)A37) in tRNAs that read codons beginning with adenine. Is involved in the transfer of the threonylcarbamoyl moiety of threonylcarbamoyl-AMP (TC-AMP) to the N6 group of A37, together with TsaE and TsaB. TsaD likely plays a direct catalytic role in this reaction. In Rhizobium meliloti (strain 1021) (Ensifer meliloti), this protein is tRNA N6-adenosine threonylcarbamoyltransferase.